A 390-amino-acid chain; its full sequence is DNA polymerase IV (390 aa).

One can recognise a UmuC domain in the interval 6–187 (VMHVDLDAFF…LDISIMPGIG (182 aa)). Mg(2+) is bound by residues Asp10 and Asp105. Glu106 is a catalytic residue.

Belongs to the DNA polymerase type-Y family. Monomer. It depends on Mg(2+) as a cofactor.

It localises to the cytoplasm. The catalysed reaction is DNA(n) + a 2'-deoxyribonucleoside 5'-triphosphate = DNA(n+1) + diphosphate. Poorly processive, error-prone DNA polymerase involved in untargeted mutagenesis. Copies undamaged DNA at stalled replication forks, which arise in vivo from mismatched or misaligned primer ends. These misaligned primers can be extended by PolIV. Exhibits no 3'-5' exonuclease (proofreading) activity. May be involved in translesional synthesis, in conjunction with the beta clamp from PolIII. In Dehalococcoides mccartyi (strain ATCC BAA-2266 / KCTC 15142 / 195) (Dehalococcoides ethenogenes (strain 195)), this protein is DNA polymerase IV.